Consider the following 501-residue polypeptide: G protein-activated inward rectifier potassium channel 1 (501 aa).

Positions 1–40 (MSALRRKFGDDYQVVTTSSSGSGLQPQGPGQDPQQQLVPK) are disordered. The Cytoplasmic portion of the chain corresponds to 1–80 (MSALRRKFGD…LFTTLVDLKW (80 aa)). Residues 18–38 (SSSGSGLQPQGPGQDPQQQLV) are compositionally biased toward low complexity. The chain crosses the membrane as a helical span at residues 81-105 (RWNLFIFILTYTVAWLFMASMWWVI). Residues 106-129 (AYTRGDLNKAHVGNYTPCVANVYN) lie on the Extracellular side of the membrane. The N-linked (GlcNAc...) asparagine glycan is linked to N119. Residues 130 to 141 (FPSAFLFFIETE) constitute an intramembrane region (helical; Pore-forming). An intramembrane region (pore-forming) is located at residues 142 to 148 (ATIGYGY). The short motif at 143 to 148 (TIGYGY) is the Selectivity filter element. The Extracellular segment spans residues 149 to 157 (RYITDKCPE). A helical transmembrane segment spans residues 158–179 (GIILFLFQSILGSIVDAFLIGC). The Cytoplasmic portion of the chain corresponds to 180 to 501 (MFIKMSQPKK…LRKMNSDRFT (322 aa)). Residues 182–209 (IKMSQPKKRAETLMFSEHAVISMRDGKL) are polyphosphoinositide (PIP2)-binding. Phosphoserine is present on residues S385 and S424.

Belongs to the inward rectifier-type potassium channel (TC 1.A.2.1) family. KCNJ3 subfamily. In terms of assembly, associates with KCNJ5/GIRK4 or KCNJ6/GIRK2 to form a G-protein activated heteromultimer pore-forming unit. The resulting inward current is much larger. Associates with KCNJ9/GIRK3 to form a G-protein activated heteromultimer pore-forming unit.

It localises to the membrane. It carries out the reaction K(+)(in) = K(+)(out). Its activity is regulated as follows. Heteromultimer composed of KCNJ3/GIRK1 and KCNJ5/GIRK4 is activated by phosphatidylinositol 4,5 biphosphate (PtdIns(4,5)P2). In terms of biological role, inward rectifier potassium channels are characterized by a greater tendency to allow potassium to flow into the cell rather than out of it. Their voltage dependence is regulated by the concentration of extracellular potassium; as external potassium is raised, the voltage range of the channel opening shifts to more positive voltages. The inward rectification is mainly due to the blockage of outward current by internal magnesium. This potassium channel is controlled by G proteins. This receptor plays a crucial role in regulating the heartbeat. In Homo sapiens (Human), this protein is G protein-activated inward rectifier potassium channel 1 (KCNJ3).